The following is a 170-amino-acid chain: Small ribosomal subunit protein uS3mA (170 aa).

Residues 1–30 (MAAPVMSALGRLQGLIRTERSLLTHVQSRC) constitute a mitochondrion transit peptide.

It belongs to the universal ribosomal protein uS3 family. As to quaternary structure, component of the mitochondrial ribosome small subunit (28S) which comprises a 12S rRNA and about 30 distinct proteins.

The protein resides in the mitochondrion. The chain is Small ribosomal subunit protein uS3mA (mrps24-a) from Xenopus laevis (African clawed frog).